Reading from the N-terminus, the 632-residue chain is Nucleoside triphosphatase I (632 aa).

Positions 42–204 constitute a Helicase ATP-binding domain; it reads FLGLDKMHSL…VMLVNLLRPK (163 aa). 55–62 is an ATP binding site; the sequence is HETGVGKT. A DEXH box motif is present at residues 141–144; sequence DECH. The 166-residue stretch at 367-532 folds into the Helicase C-terminal domain; sequence KFTDVCLRIL…EFTQLFKVFK (166 aa). The segment at 457 to 524 is binding to the cap-specific mRNA (nucleoside-2'-O-)-methyltransferase; that stretch reads DIFILDMTWN…DIIRTKSKEF (68 aa).

Belongs to the helicase family. NPH I subfamily. As to quaternary structure, monomer. Interacts (via C-terminus) with RAP94 (via N-terminus). Interacts with the cap-specific mRNA (nucleoside-2'-O-)-methyltransferase.

Its subcellular location is the virion. It carries out the reaction a ribonucleoside 5'-triphosphate + H2O = a ribonucleoside 5'-diphosphate + phosphate + H(+). In terms of biological role, DNA-dependent ATPase required for providing the needed energy to achieve the termination of early transcripts. Acts in concert with the RAP94 subunit of the virion RNA polymerase and the capping enzyme/VTF to catalyze release of UUUUUNU-containing nascent RNA from the elongation complex. NPH-I must bind ssDNA in order to exhibit ATPase activity. This Myxoma virus (strain Lausanne) (MYXV) protein is Nucleoside triphosphatase I (NPH1).